A 142-amino-acid chain; its full sequence is Large ribosomal subunit protein uL11 (142 aa).

The protein belongs to the universal ribosomal protein uL11 family. In terms of assembly, part of the ribosomal stalk of the 50S ribosomal subunit. Interacts with L10 and the large rRNA to form the base of the stalk. L10 forms an elongated spine to which L12 dimers bind in a sequential fashion forming a multimeric L10(L12)X complex. One or more lysine residues are methylated.

In terms of biological role, forms part of the ribosomal stalk which helps the ribosome interact with GTP-bound translation factors. The polypeptide is Large ribosomal subunit protein uL11 (Bartonella bacilliformis (strain ATCC 35685 / KC583 / Herrer 020/F12,63)).